Here is a 144-residue protein sequence, read N- to C-terminus: NADH dehydrogenase [ubiquinone] 1 alpha subcomplex subunit 13 (144 aa).

At alanine 2 the chain carries N-acetylalanine. Residues 30-51 (LSGYSMFAVGIGALLFGYWSMM) traverse the membrane as a helical segment.

As to quaternary structure, complex I is composed of 45 different subunits. Interacts with CARD15, but not with CARD4. Interacts with STAT3, but not with STAT1, STAT2 and STAT5A. Interacts with OLFM4.

The protein localises to the mitochondrion inner membrane. It localises to the nucleus. In terms of biological role, accessory subunit of the mitochondrial membrane respiratory chain NADH dehydrogenase (Complex I), that is believed not to be involved in catalysis. Complex I functions in the transfer of electrons from NADH to the respiratory chain. The immediate electron acceptor for the enzyme is believed to be ubiquinone. Involved in the interferon/all-trans-retinoic acid (IFN/RA) induced cell death. This apoptotic activity is inhibited by interaction with viral IRF1. Prevents the transactivation of STAT3 target genes. May play a role in CARD15-mediated innate mucosal responses and serve to regulate intestinal epithelial cell responses to microbes. This Bos taurus (Bovine) protein is NADH dehydrogenase [ubiquinone] 1 alpha subcomplex subunit 13 (NDUFA13).